A 128-amino-acid polypeptide reads, in one-letter code: Small ribosomal subunit protein bS6 (128 aa).

Positions 97–128 (TTPSPMMKEEKSRSLTAAPATDEAKPAEAESA) are disordered. Basic and acidic residues predominate over residues 118–128 (DEAKPAEAESA).

Belongs to the bacterial ribosomal protein bS6 family.

In terms of biological role, binds together with bS18 to 16S ribosomal RNA. The sequence is that of Small ribosomal subunit protein bS6 from Aromatoleum aromaticum (strain DSM 19018 / LMG 30748 / EbN1) (Azoarcus sp. (strain EbN1)).